The chain runs to 478 residues: UDP-N-acetylmuramate--L-alanine ligase (478 aa).

Residue 120–126 (GSHGKTT) participates in ATP binding.

It belongs to the MurCDEF family.

The protein localises to the cytoplasm. It catalyses the reaction UDP-N-acetyl-alpha-D-muramate + L-alanine + ATP = UDP-N-acetyl-alpha-D-muramoyl-L-alanine + ADP + phosphate + H(+). It participates in cell wall biogenesis; peptidoglycan biosynthesis. In terms of biological role, cell wall formation. The sequence is that of UDP-N-acetylmuramate--L-alanine ligase from Rickettsia felis (strain ATCC VR-1525 / URRWXCal2) (Rickettsia azadi).